Here is a 295-residue protein sequence, read N- to C-terminus: Protein LplC (295 aa).

6 consecutive transmembrane segments (helical) span residues 21–41 (ILFL…IIAG), 81–101 (VSIF…FTMA), 116–136 (LNLV…YLVV), 142–162 (LDTY…LIII), 199–219 (VIAT…FHAL), and 260–280 (GIKL…YPFL). Positions 79-280 (MGVSIFITVV…LPILAVYPFL (202 aa)) constitute an ABC transmembrane type-1 domain.

The protein belongs to the binding-protein-dependent transport system permease family. CysTW subfamily.

The protein localises to the cell membrane. The chain is Protein LplC (lplC) from Bacillus subtilis (strain 168).